A 166-amino-acid polypeptide reads, in one-letter code: NAD(P)H-quinone oxidoreductase subunit I, chloroplastic (166 aa).

2 4Fe-4S ferredoxin-type domains span residues G55 to K84 and L95 to E124. [4Fe-4S] cluster contacts are provided by C64, C67, C70, C74, C104, C107, C110, and C114.

It belongs to the complex I 23 kDa subunit family. NDH is composed of at least 16 different subunits, 5 of which are encoded in the nucleus. [4Fe-4S] cluster serves as cofactor.

The protein localises to the plastid. It is found in the chloroplast thylakoid membrane. The catalysed reaction is a plastoquinone + NADH + (n+1) H(+)(in) = a plastoquinol + NAD(+) + n H(+)(out). It carries out the reaction a plastoquinone + NADPH + (n+1) H(+)(in) = a plastoquinol + NADP(+) + n H(+)(out). Functionally, NDH shuttles electrons from NAD(P)H:plastoquinone, via FMN and iron-sulfur (Fe-S) centers, to quinones in the photosynthetic chain and possibly in a chloroplast respiratory chain. The immediate electron acceptor for the enzyme in this species is believed to be plastoquinone. Couples the redox reaction to proton translocation, and thus conserves the redox energy in a proton gradient. This is NAD(P)H-quinone oxidoreductase subunit I, chloroplastic from Enydra sessilis (Smallray swampwort).